The following is a 445-amino-acid chain: Tubulin beta chain (445 aa).

8 residues coordinate GTP: glutamine 11, glutamate 69, serine 138, glycine 142, threonine 143, glycine 144, asparagine 205, and asparagine 227. Mg(2+) is bound at residue glutamate 69.

The protein belongs to the tubulin family. In terms of assembly, dimer of alpha and beta chains. A typical microtubule is a hollow water-filled tube with an outer diameter of 25 nm and an inner diameter of 15 nM. Alpha-beta heterodimers associate head-to-tail to form protofilaments running lengthwise along the microtubule wall with the beta-tubulin subunit facing the microtubule plus end conferring a structural polarity. Microtubules usually have 13 protofilaments but different protofilament numbers can be found in some organisms and specialized cells. It depends on Mg(2+) as a cofactor.

The protein resides in the cytoplasm. It localises to the cytoskeleton. Functionally, tubulin is the major constituent of microtubules, a cylinder consisting of laterally associated linear protofilaments composed of alpha- and beta-tubulin heterodimers. Microtubules grow by the addition of GTP-tubulin dimers to the microtubule end, where a stabilizing cap forms. Below the cap, tubulin dimers are in GDP-bound state, owing to GTPase activity of alpha-tubulin. In Ajellomyces capsulatus (Darling's disease fungus), this protein is Tubulin beta chain (TUB2).